The following is a 134-amino-acid chain: ATP synthase epsilon chain (134 aa).

The protein belongs to the ATPase epsilon chain family. In terms of assembly, F-type ATPases have 2 components, CF(1) - the catalytic core - and CF(0) - the membrane proton channel. CF(1) has five subunits: alpha(3), beta(3), gamma(1), delta(1), epsilon(1). CF(0) has three main subunits: a, b and c.

It localises to the cell membrane. In terms of biological role, produces ATP from ADP in the presence of a proton gradient across the membrane. The sequence is that of ATP synthase epsilon chain from Listeria monocytogenes serotype 4a (strain HCC23).